The sequence spans 166 residues: Tegument protein UL55 homolog (166 aa).

This sequence belongs to the alphaherpesvirinae HHV-1 UL55 family.

It is found in the virion tegument. The protein localises to the host nucleus matrix. This Gallid herpesvirus 2 (strain Chicken/Md5/ATCC VR-987) (GaHV-2) protein is Tegument protein UL55 homolog (MDV070).